The sequence spans 412 residues: Serine hydroxymethyltransferase (412 aa).

(6S)-5,6,7,8-tetrahydrofolate is bound by residues Leu-116 and 120–122 (GHL). At Lys-225 the chain carries N6-(pyridoxal phosphate)lysine. Residues Glu-241 and 350 to 352 (SPF) contribute to the (6S)-5,6,7,8-tetrahydrofolate site.

It belongs to the SHMT family. As to quaternary structure, homodimer. It depends on pyridoxal 5'-phosphate as a cofactor.

It is found in the cytoplasm. The catalysed reaction is (6R)-5,10-methylene-5,6,7,8-tetrahydrofolate + glycine + H2O = (6S)-5,6,7,8-tetrahydrofolate + L-serine. The protein operates within one-carbon metabolism; tetrahydrofolate interconversion. Its pathway is amino-acid biosynthesis; glycine biosynthesis; glycine from L-serine: step 1/1. Functionally, catalyzes the reversible interconversion of serine and glycine with tetrahydrofolate (THF) serving as the one-carbon carrier. This reaction serves as the major source of one-carbon groups required for the biosynthesis of purines, thymidylate, methionine, and other important biomolecules. Also exhibits THF-independent aldolase activity toward beta-hydroxyamino acids, producing glycine and aldehydes, via a retro-aldol mechanism. This Enterococcus faecalis (strain ATCC 700802 / V583) protein is Serine hydroxymethyltransferase.